Here is a 297-residue protein sequence, read N- to C-terminus: Mycothiol acetyltransferase (297 aa).

N-acetyltransferase domains are found at residues 7–156 (VFSD…VTIR) and 153–297 (VTIR…PPPH). Glu38 is a binding site for 1D-myo-inositol 2-(L-cysteinylamino)-2-deoxy-alpha-D-glucopyranoside. Position 79 to 81 (79 to 81 (VVV)) interacts with acetyl-CoA. 3 residues coordinate 1D-myo-inositol 2-(L-cysteinylamino)-2-deoxy-alpha-D-glucopyranoside: Glu180, Lys219, and Glu227. Residues 231–233 (VGV) and 238–244 (QGLGLGR) each bind acetyl-CoA. Tyr265 contributes to the 1D-myo-inositol 2-(L-cysteinylamino)-2-deoxy-alpha-D-glucopyranoside binding site. Residue 270–275 (NRPALR) coordinates acetyl-CoA.

It belongs to the acetyltransferase family. MshD subfamily. As to quaternary structure, monomer.

It catalyses the reaction 1D-myo-inositol 2-(L-cysteinylamino)-2-deoxy-alpha-D-glucopyranoside + acetyl-CoA = mycothiol + CoA + H(+). Catalyzes the transfer of acetyl from acetyl-CoA to desacetylmycothiol (Cys-GlcN-Ins) to form mycothiol. This is Mycothiol acetyltransferase from Thermomonospora curvata (strain ATCC 19995 / DSM 43183 / JCM 3096 / KCTC 9072 / NBRC 15933 / NCIMB 10081 / Henssen B9).